Consider the following 451-residue polypeptide: Protease RseP (451 aa).

His22 is a Zn(2+) binding site. Residue Glu23 is part of the active site. His26 provides a ligand contact to Zn(2+). A helical transmembrane segment spans residues 98 to 120 (AAIVSAGPIANFLFAIVAYWLVF). PDZ domains follow at residues 115 to 186 (AYWL…APFG) and 199 to 280 (QWQF…ERES). The next 2 membrane-spanning stretches (helical) occupy residues 377–399 (LVYYLMFLALISVNLGIINLFPL) and 427–446 (FSYRIGSILLVLLMGLALFN).

It belongs to the peptidase M50B family. Interacts with RseA. Requires Zn(2+) as cofactor.

The protein localises to the cell inner membrane. A site-2 regulated intramembrane protease (S2P) that cleaves the peptide bond between 'Ala-108' and 'Cys-109' in the transmembrane region of RseA. Part of a regulated intramembrane proteolysis (RIP) cascade. Acts on DegS-cleaved RseA to release the cytoplasmic domain of RseA. This provides the cell with sigma-E (RpoE) activity through the proteolysis of RseA. This chain is Protease RseP (rseP), found in Yersinia pestis.